Consider the following 346-residue polypeptide: Tetraacyldisaccharide 4'-kinase (346 aa).

54 to 61 serves as a coordination point for ATP; that stretch reads TVGGAGKT.

It belongs to the LpxK family.

It catalyses the reaction a lipid A disaccharide + ATP = a lipid IVA + ADP + H(+). The protein operates within glycolipid biosynthesis; lipid IV(A) biosynthesis; lipid IV(A) from (3R)-3-hydroxytetradecanoyl-[acyl-carrier-protein] and UDP-N-acetyl-alpha-D-glucosamine: step 6/6. Functionally, transfers the gamma-phosphate of ATP to the 4'-position of a tetraacyldisaccharide 1-phosphate intermediate (termed DS-1-P) to form tetraacyldisaccharide 1,4'-bis-phosphate (lipid IVA). The chain is Tetraacyldisaccharide 4'-kinase from Sinorhizobium medicae (strain WSM419) (Ensifer medicae).